A 156-amino-acid polypeptide reads, in one-letter code: ATP synthase subunit b (156 aa).

A helical membrane pass occupies residues 12–32 (VAFLIFVLFCMKYVWPPVITA).

Belongs to the ATPase B chain family. In terms of assembly, F-type ATPases have 2 components, F(1) - the catalytic core - and F(0) - the membrane proton channel. F(1) has five subunits: alpha(3), beta(3), gamma(1), delta(1), epsilon(1). F(0) has three main subunits: a(1), b(2) and c(10-14). The alpha and beta chains form an alternating ring which encloses part of the gamma chain. F(1) is attached to F(0) by a central stalk formed by the gamma and epsilon chains, while a peripheral stalk is formed by the delta and b chains.

The protein localises to the cell inner membrane. F(1)F(0) ATP synthase produces ATP from ADP in the presence of a proton or sodium gradient. F-type ATPases consist of two structural domains, F(1) containing the extramembraneous catalytic core and F(0) containing the membrane proton channel, linked together by a central stalk and a peripheral stalk. During catalysis, ATP synthesis in the catalytic domain of F(1) is coupled via a rotary mechanism of the central stalk subunits to proton translocation. In terms of biological role, component of the F(0) channel, it forms part of the peripheral stalk, linking F(1) to F(0). In Pseudomonas putida (strain ATCC 47054 / DSM 6125 / CFBP 8728 / NCIMB 11950 / KT2440), this protein is ATP synthase subunit b.